The following is an 842-amino-acid chain: Elongation factor 2 (842 aa).

The 237-residue stretch at 17–253 folds into the tr-type G domain; that stretch reads TNVRNMSVIA…LWGDSYFNPK (237 aa). GTP-binding positions include 26–33, 158–161, and 213–215; these read AHVDHGKS, NKVD, and SGL. At histidine 699 the chain carries Diphthamide.

Belongs to the TRAFAC class translation factor GTPase superfamily. Classic translation factor GTPase family. EF-G/EF-2 subfamily.

The protein resides in the cytoplasm. It carries out the reaction GTP + H2O = GDP + phosphate + H(+). Functionally, catalyzes the GTP-dependent ribosomal translocation step during translation elongation. During this step, the ribosome changes from the pre-translocational (PRE) to the post-translocational (POST) state as the newly formed A-site-bound peptidyl-tRNA and P-site-bound deacylated tRNA move to the P and E sites, respectively. Catalyzes the coordinated movement of the two tRNA molecules, the mRNA and conformational changes in the ribosome. This Komagataella pastoris (Yeast) protein is Elongation factor 2 (EFT1).